The following is a 455-amino-acid chain: MLINKTKRAEQNLNNLPFLALQAEQIEFLGSSAEFKTQIIELIRNAKKRIYVTALYWQKDEAGQEILDEIYRVKQENPHLDVKVLIDWHRAQRNLLGAEKSATNADWYCEQRQTYQLPDDPNMFFGVPINTREVFGVLHVKGFVFDDTVLYSGASINNVYLHQFEKYRYDRYQKITHAELADSMVNFINDYLLDFSAVYPLDVTNRPRTKEIRGNIRAYRKDLAQNGEYSLKSAVKLPNVLSVSPLFGLGASGNELNQVIEDLFLQVQKKLVICTPYFNFPRTLQHKIATLLENGKRVEIIVGDKVANDFYIPPEQPFKMAGALPYLYESNLRRFCEKFETQIESGQLVVRLWRDGDNTYHLKGVWVDDRYILLTGNNLNPRAWRLDAENGLLIYDPQQQLLAQVEKEQNQIRQHTKVLKHYTELEELNQYPEPVQKLLKKFARIKADKLVKMIL.

PLD phosphodiesterase domains lie at 134 to 160 and 356 to 383; these read VFGVLHVKGFVFDDTVLYSGASINNVY and GDNTYHLKGVWVDDRYILLTGNNLNPRA.

This sequence belongs to the CDP-alcohol phosphatidyltransferase class-II family. In terms of assembly, multimeric.

It is found in the cytoplasm. Its subcellular location is the cell inner membrane. It carries out the reaction a CDP-1,2-diacyl-sn-glycerol + L-serine = a 1,2-diacyl-sn-glycero-3-phospho-L-serine + CMP + H(+). The chain is CDP-diacylglycerol--serine O-phosphatidyltransferase (pssA) from Haemophilus influenzae (strain ATCC 51907 / DSM 11121 / KW20 / Rd).